Here is a 532-residue protein sequence, read N- to C-terminus: Putative cysteine desulfurase PbSufS (532 aa).

The signal sequence occupies residues 1 to 18; it reads MNNESICILLLLFVKITS. N6-(pyridoxal phosphate)lysine is present on lysine 286. Residue cysteine 480 is the Cysteine persulfide intermediate of the active site.

Belongs to the class-V pyridoxal-phosphate-dependent aminotransferase family. Csd subfamily. In terms of assembly, monomer. Interacts with SufE; interaction enhances cysteine desulfurase activity of SufS. Pyridoxal 5'-phosphate is required as a cofactor.

Its subcellular location is the plastid. It localises to the apicoplast. It catalyses the reaction (sulfur carrier)-H + L-cysteine = (sulfur carrier)-SH + L-alanine. The protein operates within cofactor biosynthesis; iron-sulfur cluster biosynthesis. Its function is as follows. Catalyzes sulfur activation and mobilization in sulfur mobilization (SUF) pathway for iron-sulfur (Fe-S) cluster biogenesis. Active when in complex with a partner protein SufE. Required for apicoplast maintenance. Plays a role in the development of sporozoites in oocysts in mosquitoes. In Plasmodium berghei (strain Anka), this protein is Putative cysteine desulfurase PbSufS.